A 111-amino-acid polypeptide reads, in one-letter code: Somatostatin-1B (111 aa).

Residues Met-1–Ala-19 form the signal peptide. Residues Ala-20–Arg-87 constitute a propeptide that is removed on maturation. Cys-100 and Cys-111 form a disulfide bridge.

The protein belongs to the somatostatin family.

Its subcellular location is the secreted. Functionally, somatostatin inhibits the release of somatotropin. The sequence is that of Somatostatin-1B (sst1b) from Carassius auratus (Goldfish).